The sequence spans 302 residues: MENTQRPSFDCEIRAKYRWFMTDSYVAAARLGSPARRTPRTRRYAMTPPAFFAVAYAINPWMDVTAPVDVQVAQAQWEHLHQTYLRLGHSVDLIEPISGLPDMVYTANGGFIAHDIAVVARFRFPERAGESRAYASWMSSVGYRPVTTRHVNEGQGDLLMVGERVLAGYGFRTDQRAHAEIAAVLGLPVVSLELVDPRFYHLDTALAVLDDHTIAYYPPAFSTAAQEQLSALFPDAIVVGSADAFVFGLNAVSDGLNVVLPVAAMGFAAQLRAAGFEPVGVDLSELLKGGGSVKCCTLEIHP.

Substrate is bound by residues Asp102, Arg127, and Arg172. His201 serves as the catalytic Proton donor. The active-site Nucleophile is Cys295.

Belongs to the DDAH family.

It catalyses the reaction N(omega),N(omega)-dimethyl-L-arginine + H2O = dimethylamine + L-citrulline. It carries out the reaction N(omega)-methyl-L-arginine + H2O = L-citrulline + methylamine. Functionally, hydrolyzes N(G),N(G)-dimethyl-L-arginine (ADMA) and N(G)-monomethyl-L-arginine (MMA). The sequence is that of N(G),N(G)-dimethylarginine dimethylaminohydrolase from Mycobacterium tuberculosis (strain ATCC 25618 / H37Rv).